We begin with the raw amino-acid sequence, 516 residues long: Bifunctional purine biosynthesis protein PurH (516 aa).

An MGS-like domain is found at 1-146 (MAPFALLSVS…KNHADVAVLT (146 aa)).

Belongs to the PurH family.

It catalyses the reaction (6R)-10-formyltetrahydrofolate + 5-amino-1-(5-phospho-beta-D-ribosyl)imidazole-4-carboxamide = 5-formamido-1-(5-phospho-D-ribosyl)imidazole-4-carboxamide + (6S)-5,6,7,8-tetrahydrofolate. The enzyme catalyses IMP + H2O = 5-formamido-1-(5-phospho-D-ribosyl)imidazole-4-carboxamide. Its pathway is purine metabolism; IMP biosynthesis via de novo pathway; 5-formamido-1-(5-phospho-D-ribosyl)imidazole-4-carboxamide from 5-amino-1-(5-phospho-D-ribosyl)imidazole-4-carboxamide (10-formyl THF route): step 1/1. It participates in purine metabolism; IMP biosynthesis via de novo pathway; IMP from 5-formamido-1-(5-phospho-D-ribosyl)imidazole-4-carboxamide: step 1/1. The polypeptide is Bifunctional purine biosynthesis protein PurH (Parasynechococcus marenigrum (strain WH8102)).